The chain runs to 98 residues: MTSNALYELFRRRLPRAPVNTVMFLTRRTRDGFCGRLTSIATNSHYTMFVLDHGSVRIERPSQSEVDCASLMETLKRIRLRNSWVASEDELDVSRGDA.

This sequence belongs to the HHV-5 UL19 protein family.

This is an uncharacterized protein from Human cytomegalovirus (strain AD169) (HHV-5).